A 296-amino-acid chain; its full sequence is Bifunctional protein FolD (296 aa).

NADP(+)-binding positions include 166–168 (GRS), Ser-195, and Ile-236.

It belongs to the tetrahydrofolate dehydrogenase/cyclohydrolase family. In terms of assembly, homodimer.

The catalysed reaction is (6R)-5,10-methylene-5,6,7,8-tetrahydrofolate + NADP(+) = (6R)-5,10-methenyltetrahydrofolate + NADPH. It carries out the reaction (6R)-5,10-methenyltetrahydrofolate + H2O = (6R)-10-formyltetrahydrofolate + H(+). Its pathway is one-carbon metabolism; tetrahydrofolate interconversion. Functionally, catalyzes the oxidation of 5,10-methylenetetrahydrofolate to 5,10-methenyltetrahydrofolate and then the hydrolysis of 5,10-methenyltetrahydrofolate to 10-formyltetrahydrofolate. This Chlorobium limicola (strain DSM 245 / NBRC 103803 / 6330) protein is Bifunctional protein FolD.